Consider the following 55-residue polypeptide: Large ribosomal subunit protein bL33 (55 aa).

This sequence belongs to the bacterial ribosomal protein bL33 family.

This Burkholderia cenocepacia (strain ATCC BAA-245 / DSM 16553 / LMG 16656 / NCTC 13227 / J2315 / CF5610) (Burkholderia cepacia (strain J2315)) protein is Large ribosomal subunit protein bL33.